The following is a 417-amino-acid chain: Histidine--tRNA ligase (417 aa).

The protein belongs to the class-II aminoacyl-tRNA synthetase family. In terms of assembly, homodimer.

The protein localises to the cytoplasm. The catalysed reaction is tRNA(His) + L-histidine + ATP = L-histidyl-tRNA(His) + AMP + diphosphate + H(+). This is Histidine--tRNA ligase from Nitratidesulfovibrio vulgaris (strain ATCC 29579 / DSM 644 / CCUG 34227 / NCIMB 8303 / VKM B-1760 / Hildenborough) (Desulfovibrio vulgaris).